The sequence spans 623 residues: Sterol O-acyltransferase 1 (623 aa).

The segment at 20-99 (NSAEPSKRHS…EQAEEKYPVD (80 aa)) is disordered. The span at 57–72 (ATTTATGVAVAAAAAA) shows a compositional bias: low complexity. Over residues 83 to 92 (DGDDEQDEQA) the composition is skewed to acidic residues. Transmembrane regions (helical) follow at residues 195-215 (LESNFSGIYVFAWMFMGWIAF), 242-262 (LFTIALLDLALFLSTFFVVFV), 277-297 (GFVAVSLFELCFIPVSFPVYV), 384-404 (ISCSNYFMFCMFPVLVYQINY), and 422-442 (IMGTIFLMMVTAQIFMHPVAM). The FYXDWWN motif motif lies at 504–510 (FYGDWWN). 2 helical membrane-spanning segments follow: residues 548–568 (ATLFTFLLSAVFHEIAMFAIF) and 603–623 (VVFTFGVCTGPSMIMTLYLTL). Residue His560 is part of the active site.

Belongs to the membrane-bound acyltransferase family. Sterol o-acyltransferase subfamily.

Its subcellular location is the endoplasmic reticulum membrane. In terms of biological role, sterol O-acyltransferase that catalyzes the formation of stery esters. This Saccharomyces uvarum (strain ATCC 76518 / CBS 7001 / CLIB 283 / NBRC 10550 / MCYC 623 / NCYC 2669 / NRRL Y-11845) (Yeast) protein is Sterol O-acyltransferase 1 (ARE1).